The sequence spans 637 residues: Threonine--tRNA ligase (637 aa).

Positions Met-1 to Thr-61 constitute a TGS domain. The interval Asp-242–Pro-532 is catalytic. Positions 333, 384, and 509 each coordinate Zn(2+).

Belongs to the class-II aminoacyl-tRNA synthetase family. In terms of assembly, homodimer. Requires Zn(2+) as cofactor.

The protein localises to the cytoplasm. It carries out the reaction tRNA(Thr) + L-threonine + ATP = L-threonyl-tRNA(Thr) + AMP + diphosphate + H(+). Its function is as follows. Catalyzes the attachment of threonine to tRNA(Thr) in a two-step reaction: L-threonine is first activated by ATP to form Thr-AMP and then transferred to the acceptor end of tRNA(Thr). Also edits incorrectly charged L-seryl-tRNA(Thr). The sequence is that of Threonine--tRNA ligase from Clostridium novyi (strain NT).